The chain runs to 393 residues: Putative competence-damage inducible protein (393 aa).

Belongs to the CinA family.

In Streptococcus suis (strain 05ZYH33), this protein is Putative competence-damage inducible protein.